The chain runs to 313 residues: Dehydrogenase/reductase SDR family member 1 (313 aa).

Ala-2 is subject to N-acetylalanine. Ile-19 provides a ligand contact to NAD(+). At Arg-21 the chain carries Omega-N-methylarginine. Asp-64 serves as a coordination point for NAD(+). Ser-151 contributes to the substrate binding site. Positions 163, 167, and 198 each coordinate NAD(+). The active-site Proton acceptor is Tyr-163. Residues 235-313 (CVVALATDPN…WIIALYTSKF (79 aa)) form a required for ER localization region.

This sequence belongs to the short-chain dehydrogenases/reductases (SDR) family. As to expression, detected in heart, liver, adrenal glands, and at low levels in skeletal muscle, kidney, pancreas and brain.

Its subcellular location is the endoplasmic reticulum. The enzyme catalyses 17alpha-estradiol + NADP(+) = estrone + NADPH + H(+). It catalyses the reaction testosterone + NADP(+) = androst-4-ene-3,17-dione + NADPH + H(+). It carries out the reaction prostaglandin E1 + NADPH + H(+) = prostaglandin F1 + NADP(+). The catalysed reaction is isatin + NADPH + H(+) = 3-hydroxyindolin-2-one + NADP(+). In terms of biological role, NADPH-dependent oxidoreductase which catalyzes the reduction of steroids (estrone, androstene-3,17-dione and cortisone) as well as prostaglandin E1, isatin and xenobiotics in vitro. May have a role in steroid and/or xenobiotic metabolism. This Homo sapiens (Human) protein is Dehydrogenase/reductase SDR family member 1.